Here is a 268-residue protein sequence, read N- to C-terminus: MDILQKIMQQKAQEVAIRRGQVSEAALLQRVKYAPPTQGFAHALLSRAQQGQNGVIAEVKRGSPSKGRIYPEHLAWQPAQIAESYRANGAACISCLTDETFFMGHDAFLQAIRAAVACPVLRKDFLYHSYQVVEARSLGADAILLIMAVLETPQAQELEAAARELGMDVLVEVHDERELEQAHELKTPLMGVNNRNLKTFVTDIETSFRLAARMEKGRLAISESGLNTPEDLARLNEAGIFSFLIGESLMRGGEPGGALAQLLGREVV.

The protein belongs to the TrpC family.

It carries out the reaction 1-(2-carboxyphenylamino)-1-deoxy-D-ribulose 5-phosphate + H(+) = (1S,2R)-1-C-(indol-3-yl)glycerol 3-phosphate + CO2 + H2O. It functions in the pathway amino-acid biosynthesis; L-tryptophan biosynthesis; L-tryptophan from chorismate: step 4/5. This Magnetococcus marinus (strain ATCC BAA-1437 / JCM 17883 / MC-1) protein is Indole-3-glycerol phosphate synthase.